A 168-amino-acid polypeptide reads, in one-letter code: Photosystem I assembly protein Ycf3 (168 aa).

TPR repeat units follow at residues 35 to 68, 72 to 105, and 120 to 153; these read AFTY…EIDP, SYIL…NPFL, and GEQA…TPGN.

Belongs to the Ycf3 family.

The protein localises to the plastid. It is found in the chloroplast thylakoid membrane. Its function is as follows. Essential for the assembly of the photosystem I (PSI) complex. May act as a chaperone-like factor to guide the assembly of the PSI subunits. The chain is Photosystem I assembly protein Ycf3 from Oenothera elata subsp. hookeri (Hooker's evening primrose).